The primary structure comprises 326 residues: Delta-aminolevulinic acid dehydratase (326 aa).

Zn(2+) contacts are provided by Cys125, Cys127, and Cys135. Lys200 functions as the Schiff-base intermediate with substrate in the catalytic mechanism. Positions 210 and 222 each coordinate 5-aminolevulinate. A Mg(2+)-binding site is contributed by Glu238. Residue Lys253 is the Schiff-base intermediate with substrate of the active site. Ser279 lines the 5-aminolevulinate pocket.

The protein belongs to the ALAD family. Homooctamer. It depends on Zn(2+) as a cofactor.

It catalyses the reaction 2 5-aminolevulinate = porphobilinogen + 2 H2O + H(+). Its pathway is porphyrin-containing compound metabolism; protoporphyrin-IX biosynthesis; coproporphyrinogen-III from 5-aminolevulinate: step 1/4. In terms of biological role, catalyzes an early step in the biosynthesis of tetrapyrroles. Binds two molecules of 5-aminolevulinate per subunit, each at a distinct site, and catalyzes their condensation to form porphobilinogen. This Methanothermobacter thermautotrophicus (strain ATCC 29096 / DSM 1053 / JCM 10044 / NBRC 100330 / Delta H) (Methanobacterium thermoautotrophicum) protein is Delta-aminolevulinic acid dehydratase (hemB).